We begin with the raw amino-acid sequence, 570 residues long: Proline--tRNA ligase (570 aa).

Belongs to the class-II aminoacyl-tRNA synthetase family. ProS type 1 subfamily. In terms of assembly, homodimer.

It is found in the cytoplasm. It catalyses the reaction tRNA(Pro) + L-proline + ATP = L-prolyl-tRNA(Pro) + AMP + diphosphate. Catalyzes the attachment of proline to tRNA(Pro) in a two-step reaction: proline is first activated by ATP to form Pro-AMP and then transferred to the acceptor end of tRNA(Pro). As ProRS can inadvertently accommodate and process non-cognate amino acids such as alanine and cysteine, to avoid such errors it has two additional distinct editing activities against alanine. One activity is designated as 'pretransfer' editing and involves the tRNA(Pro)-independent hydrolysis of activated Ala-AMP. The other activity is designated 'posttransfer' editing and involves deacylation of mischarged Ala-tRNA(Pro). The misacylated Cys-tRNA(Pro) is not edited by ProRS. In Thermoanaerobacter pseudethanolicus (strain ATCC 33223 / 39E) (Clostridium thermohydrosulfuricum), this protein is Proline--tRNA ligase.